We begin with the raw amino-acid sequence, 97 residues long: Small, acid-soluble spore protein gamma-type (97 aa).

Residues 1–42 show a composition bias toward polar residues; that stretch reads MAKQTNKTASGTSTQHVKQQNAQASKNNFGTEFGSETNVQEV. The disordered stretch occupies residues 1–97; that stretch reads MAKQTNKTAS…KNQNSGKYQG (97 aa). 2 consecutive repeats follow at residues 23 to 56 and 58 to 91; these read QASK…KSQN and QASK…KNQN. The span at 43–63 shows a compositional bias: low complexity; it reads KQQNAQAAANKSQNAQASKNN. Residues 69 to 78 show a composition bias toward polar residues; that stretch reads ASETSAQEVR. The span at 79–91 shows a compositional bias: low complexity; sequence QQNAQAQAKKNQN.

Belongs to the gamma-type SASP family.

In terms of biological role, SASP are proteins degraded in the first minutes of spore germination and provide amino acids for both new protein synthesis and metabolism. These proteins may be involved in dormant spore's high resistance to UV light. This chain is Small, acid-soluble spore protein gamma-type (sasP-B), found in Priestia megaterium (Bacillus megaterium).